Here is a 118-residue protein sequence, read N- to C-terminus: Putative pterin-4-alpha-carbinolamine dehydratase (118 aa).

It belongs to the pterin-4-alpha-carbinolamine dehydratase family.

The enzyme catalyses (4aS,6R)-4a-hydroxy-L-erythro-5,6,7,8-tetrahydrobiopterin = (6R)-L-erythro-6,7-dihydrobiopterin + H2O. This is Putative pterin-4-alpha-carbinolamine dehydratase from Azotobacter vinelandii (strain DJ / ATCC BAA-1303).